The primary structure comprises 273 residues: Cell division cycle-associated protein 3 (273 aa).

2 disordered regions span residues 1–231 (MGST…ALSE) and 251–273 (GGGA…LMES). Serine 29 and serine 31 each carry phosphoserine. Positions 32–45 (AGIQRTPIQVESSP) are enriched in polar residues. Position 37 is a phosphothreonine (threonine 37). A phosphoserine mark is found at serine 44 and serine 67. At threonine 75 the chain carries Phosphothreonine. Residues 90-124 (KELSEVFETEVSETEVSESISSPVLGLPQETPLSS) are F-box-like. Serine 93 bears the Phosphoserine mark. A compositionally biased stretch (acidic residues) spans 94-105 (EVFETEVSETEV). Polar residues-rich tracts occupy residues 144–154 (PWSQTELNSKQ) and 164–175 (STETMVSGQTSD). A Phosphoserine modification is found at serine 204. Position 207 is a phosphothreonine (threonine 207). The span at 210 to 220 (QDDNSPGTLTL) shows a compositional bias: polar residues. Serine 214 is subject to Phosphoserine. Threonine 217 carries the phosphothreonine modification. The short motif at 263–265 (KEN) is the KEN box element.

Interacts with SKP1. Part of a SCF (SKP1-cullin-F-box) protein ligase complex. Post-translationally, ubiquitinated and degraded by the APC/C-Cdh1 complex.

It localises to the cytoplasm. The protein localises to the cytosol. Its pathway is protein modification; protein ubiquitination. In terms of biological role, F-box-like protein which is required for entry into mitosis. Acts by participating in E3 ligase complexes that mediate the ubiquitination and degradation of WEE1 kinase at G2/M phase. The chain is Cell division cycle-associated protein 3 (Cdca3) from Rattus norvegicus (Rat).